Reading from the N-terminus, the 141-residue chain is Large ribosomal subunit protein uL11 (141 aa).

This sequence belongs to the universal ribosomal protein uL11 family. Part of the ribosomal stalk of the 50S ribosomal subunit. Interacts with L10 and the large rRNA to form the base of the stalk. L10 forms an elongated spine to which L12 dimers bind in a sequential fashion forming a multimeric L10(L12)X complex. One or more lysine residues are methylated.

Its function is as follows. Forms part of the ribosomal stalk which helps the ribosome interact with GTP-bound translation factors. This chain is Large ribosomal subunit protein uL11, found in Chlorobium phaeobacteroides (strain BS1).